The primary structure comprises 57 residues: UPF0391 membrane protein Nwi_2359 (57 aa).

Transmembrane regions (helical) follow at residues 4–24 and 30–50; these read WVVTFLVIALIAGVLGFGGIA and IAKIIFFIALILFVISAVVGF.

The protein belongs to the UPF0391 family.

It localises to the cell membrane. This chain is UPF0391 membrane protein Nwi_2359, found in Nitrobacter winogradskyi (strain ATCC 25391 / DSM 10237 / CIP 104748 / NCIMB 11846 / Nb-255).